A 1383-amino-acid chain; its full sequence is Spike glycoprotein (1383 aa).

Residues 1-25 (MRSLIYFWLLLPVLPTLSLPQDVTR) form the signal peptide. Residues 26–734 (CQSTTNFRRF…TRELPGFFYH (709 aa)) are S1. Residues 26–1324 (CQSTTNFRRF…NRVETYIKWP (1299 aa)) are Virion surface-facing. The interval 617–745 (FQFTKGELIT…NDGSNCTEPV (129 aa)) is interaction with host ANPEP. An S2 region spans residues 735–1383 (SNDGSNCTEP…YEAFEKVHVQ (649 aa)). Positions 955 to 975 (IGGMALGGITAAAALPFSYAV) are fusion peptide. The heptad repeat 1 (HR1) stretch occupies residues 969-1088 (LPFSYAVQAR…QVDRLITGRL (120 aa)). 2 coiled-coil regions span residues 1036–1080 (QEVV…DVQV) and 1272–1314 (TYLN…LEWL). The tract at residues 1240-1336 (PDYIDVNKTL…VWLIIVIVLI (97 aa)) is heptad repeat 2 (HR2). A helical membrane pass occupies residues 1325–1344 (WWVWLIIVIVLIFVVSLLVF). Over 1345-1383 (CCISTGCCGCCGCCGACFSGCCRGPRLQPYEAFEKVHVQ) the chain is Intravirion. The short motif at 1379-1383 (KVHVQ) is the KxHxx element.

This sequence belongs to the alphacoronaviruses spike protein family. Homotrimer. During virus morphogenesis, found in a complex with M and HE proteins. Interacts with host ANPEP.

The protein localises to the virion membrane. It is found in the host endoplasmic reticulum-Golgi intermediate compartment membrane. In terms of biological role, S1 region attaches the virion to the cell membrane by interacting with host ANPEP/aminopeptidase N, initiating the infection. Binding to the receptor probably induces conformational changes in the S glycoprotein unmasking the fusion peptide of S2 region and activating membranes fusion. S2 region belongs to the class I viral fusion protein. Under the current model, the protein has at least 3 conformational states: pre-fusion native state, pre-hairpin intermediate state, and post-fusion hairpin state. During viral and target cell membrane fusion, the coiled coil regions (heptad repeats) regions assume a trimer-of-hairpins structure, positioning the fusion peptide in close proximity to the C-terminal region of the ectodomain. The formation of this structure appears to drive apposition and subsequent fusion of viral and target cell membranes. The chain is Spike glycoprotein from Porcine epidemic diarrhea virus (strain CV777) (PEDV).